Consider the following 141-residue polypeptide: HTH-type transcriptional repressor NsrR (141 aa).

The region spanning 2–129 (QLTSFTDYAL…DECTIESLLS (128 aa)) is the HTH rrf2-type domain. The segment at residues 28 to 51 (ITEVTDLFGVSRNHMVKVINRLGQ) is a DNA-binding region (H-T-H motif). Residues Cys91, Cys96, and Cys102 each contribute to the [2Fe-2S] cluster site.

Requires [2Fe-2S] cluster as cofactor.

In terms of biological role, nitric oxide-sensitive repressor of genes involved in protecting the cell against nitrosative stress. May require iron for activity. The sequence is that of HTH-type transcriptional repressor NsrR from Vibrio parahaemolyticus serotype O3:K6 (strain RIMD 2210633).